The primary structure comprises 583 residues: Bifunctional lycopene cyclase/phytoene synthase (583 aa).

The interval 1 to 243 (MGFDYALVHL…IVFGQLAFDN (243 aa)) is lycopene beta-cyclase. 7 consecutive transmembrane segments (helical) span residues 3 to 23 (FDYALVHLKYTIPPAVLLTWL), 35 to 55 (KVGYLVSIAVASTIPWDSYLI), 75 to 97 (IPLEEVFFFIIQTYNTSLLYLLL), 120 to 140 (YMRLAGQVFFLALIAWGWRCI), 151 to 171 (LILVWAGPFLLMLWSLAYQFI), 173 to 193 (ALPVTNTALPIFLPTLYLWVV), and 221 to 241 (IEEALFFLATNALIVFGQLAF). The interval 250 to 583 (TFPHLFTGPS…MVAWRTLNSK (334 aa)) is phytoene synthase.

In the N-terminal section; belongs to the lycopene beta-cyclase family. The protein in the C-terminal section; belongs to the phytoene/squalene synthase family.

It is found in the membrane. The catalysed reaction is all-trans-lycopene = gamma-carotene. It catalyses the reaction gamma-carotene = all-trans-beta-carotene. It carries out the reaction 2 (2E,6E,10E)-geranylgeranyl diphosphate = 15-cis-phytoene + 2 diphosphate. The protein operates within carotenoid biosynthesis; beta-carotene biosynthesis. It participates in carotenoid biosynthesis; phytoene biosynthesis; all-trans-phytoene from geranylgeranyl diphosphate: step 1/1. In terms of biological role, bifunctional enzyme that catalyzes the reactions from geranylgeranyl diphosphate to phytoene (phytoene synthase) and lycopene to beta-carotene via the intermediate gamma-carotene (lycopene cyclase). The chain is Bifunctional lycopene cyclase/phytoene synthase from Pyrenophora tritici-repentis (strain Pt-1C-BFP) (Wheat tan spot fungus).